Consider the following 454-residue polypeptide: Ribosomal protein uS12 methylthiotransferase RimO (454 aa).

The 111-residue stretch at 19–129 folds into the MTTase N-terminal domain; it reads AKVGFVSLGC…VLAQVHEHVA (111 aa). [4Fe-4S] cluster is bound by residues C28, C64, C93, C161, C165, and C168. One can recognise a Radical SAM core domain in the interval 147-384; that stretch reads LTPKHYAYLK…MAVQAKISSD (238 aa). A TRAM domain is found at 387–453; it reads QVRIGQEYLI…EHDVWGVRVE (67 aa).

It belongs to the methylthiotransferase family. RimO subfamily. [4Fe-4S] cluster serves as cofactor.

It is found in the cytoplasm. It carries out the reaction L-aspartate(89)-[ribosomal protein uS12]-hydrogen + (sulfur carrier)-SH + AH2 + 2 S-adenosyl-L-methionine = 3-methylsulfanyl-L-aspartate(89)-[ribosomal protein uS12]-hydrogen + (sulfur carrier)-H + 5'-deoxyadenosine + L-methionine + A + S-adenosyl-L-homocysteine + 2 H(+). Functionally, catalyzes the methylthiolation of an aspartic acid residue of ribosomal protein uS12. The polypeptide is Ribosomal protein uS12 methylthiotransferase RimO (Colwellia psychrerythraea (strain 34H / ATCC BAA-681) (Vibrio psychroerythus)).